A 68-amino-acid chain; its full sequence is U-reduvitoxin-Pr3a (68 aa).

The N-terminal stretch at 1–22 is a signal peptide; the sequence is MKAGMKLVLVLVIASIALLALA. Cystine bridges form between Cys-29–Cys-47, Cys-36–Cys-52, and Cys-46–Cys-59.

It belongs to the venom Ptu1-like knottin family. As to expression, expressed by the venom gland.

Its subcellular location is the secreted. In terms of biological role, binds reversibly and blocks P/Q-type voltage-gated calcium channels (Cav). In Platymeris rhadamanthus (Red spot assassin bug), this protein is U-reduvitoxin-Pr3a.